The chain runs to 156 residues: Small ribosomal subunit protein uS7 (156 aa).

It belongs to the universal ribosomal protein uS7 family. In terms of assembly, part of the 30S ribosomal subunit. Contacts proteins S9 and S11.

Functionally, one of the primary rRNA binding proteins, it binds directly to 16S rRNA where it nucleates assembly of the head domain of the 30S subunit. Is located at the subunit interface close to the decoding center, probably blocks exit of the E-site tRNA. The chain is Small ribosomal subunit protein uS7 from Streptococcus agalactiae serotype Ia (strain ATCC 27591 / A909 / CDC SS700).